Reading from the N-terminus, the 180-residue chain is Insertion element IS1296 uncharacterized 21.4 kDa protein (180 aa).

This sequence belongs to the IS150/IS1296 orfA family.

This Mycoplasma mycoides subsp. mycoides SC protein is Insertion element IS1296 uncharacterized 21.4 kDa protein.